A 408-amino-acid polypeptide reads, in one-letter code: Inhibin beta B chain (408 aa).

The signal sequence occupies residues 1-28 (MDGLPGRALGAACLLMLAVGSLGPGVWG). Residues 29-60 (SPTPPPLPAAPQPPPPPPGAPGGSQDTCTSCG) form a disordered region. Residues 29–293 (SPTPPPLPAA…GDSRHRIRKR (265 aa)) constitute a propeptide that is removed on maturation. A compositionally biased stretch (pro residues) spans 30 to 48 (PTPPPLPAAPQPPPPPPGA). Asn94 carries an N-linked (GlcNAc...) asparagine glycan. Cystine bridges form between Cys297–Cys305, Cys304–Cys373, Cys333–Cys405, and Cys337–Cys407.

The protein belongs to the TGF-beta family. In terms of assembly, dimeric, linked by one or more disulfide bonds. Inhibin B is a dimer of alpha and beta-B. Activin B is a homodimer of beta-B. Activin AB is a dimer of beta-A and beta-B. Interacts with FST and FSTL3.

The protein resides in the secreted. Inhibins and activins inhibit and activate, respectively, the secretion of follitropin by the pituitary gland. Inhibins/activins are involved in regulating a number of diverse functions such as hypothalamic and pituitary hormone secretion, gonadal hormone secretion, germ cell development and maturation, erythroid differentiation, insulin secretion, nerve cell survival, embryonic axial development or bone growth, depending on their subunit composition. Inhibins appear to oppose the functions of activins. Functionally, activin B is a dimer of alpha and beta-B that plays a role in several essential biological processes including embryonic development, stem cell maintenance and differentiation, haematopoiesis, cell proliferation and wound healing. Signals through type I receptor ACVR1C, abundantly expressed in pancreatic beta cells, and type II receptors like ACVR2A. Upon ligand binding, these receptors phosphorylate intracellular signaling mediators SMAD2 and SMAD3, which form a complex with SMAD4, translocate to the nucleus, and regulate gene expression. Plays a crucial role in the induction of hepcidin by inflammation through activation of ACVR1C and subsequent phosphorylation of SMAD1/5/8. Regulates adipocyte lipid metabolism by decreasing non-esterified fatty acids and glycerol release and increases intracellular triglyceride content. Stimulates wound healing by promoting cell migration and hair follicle regeneration through the JNK and ERK signaling pathways downstream of RHOA. In terms of biological role, inhibin B is a dimer of alpha and beta-B that plays a crucial role in the regulation of the reproductive system by inhibiting the secretion of follicle-stimulating hormone (FSH) from the anterior pituitary gland. Thereby, maintains reproductive homeostasis in both males and females. Acts as a more potent suppressor of FSH release than inhibin A. Functions as competitive receptor antagonist binding activin type II receptors with high affinity in the presence of the TGF-beta type III coreceptor/TGFBR3L. The chain is Inhibin beta B chain (INHBB) from Bos taurus (Bovine).